A 212-amino-acid chain; its full sequence is Ribosomal RNA small subunit methyltransferase G (212 aa).

S-adenosyl-L-methionine is bound by residues G72, L77, 123-124, and R138; that span reads VE.

Belongs to the methyltransferase superfamily. RNA methyltransferase RsmG family.

It is found in the cytoplasm. It carries out the reaction guanosine(527) in 16S rRNA + S-adenosyl-L-methionine = N(7)-methylguanosine(527) in 16S rRNA + S-adenosyl-L-homocysteine. Its function is as follows. Specifically methylates the N7 position of guanine in position 527 of 16S rRNA. This Histophilus somni (strain 2336) (Haemophilus somnus) protein is Ribosomal RNA small subunit methyltransferase G.